A 193-amino-acid chain; its full sequence is Probable nicotinate-nucleotide adenylyltransferase (193 aa).

The protein belongs to the NadD family.

It catalyses the reaction nicotinate beta-D-ribonucleotide + ATP + H(+) = deamido-NAD(+) + diphosphate. The protein operates within cofactor biosynthesis; NAD(+) biosynthesis; deamido-NAD(+) from nicotinate D-ribonucleotide: step 1/1. Functionally, catalyzes the reversible adenylation of nicotinate mononucleotide (NaMN) to nicotinic acid adenine dinucleotide (NaAD). The polypeptide is Probable nicotinate-nucleotide adenylyltransferase (Fusobacterium nucleatum subsp. nucleatum (strain ATCC 25586 / DSM 15643 / BCRC 10681 / CIP 101130 / JCM 8532 / KCTC 2640 / LMG 13131 / VPI 4355)).